Reading from the N-terminus, the 387-residue chain is MSVIKMTDLDLAGKRVFIRADLNVPVKDGKVTSDARIRASLPTIELALKQGAKVMVTSHLGRPTEGEYNEEFSLLPVVNYLKDKLSNPVRLVKDYLDGVDVAEGELVVLENVRFNKGEKKDDETLSKKYAALCDVFVMDAFGTAHRAQASTHGIGKFADVACAGPLLAAELDALGKALKEPARPMVAIVGGSKVSTKLTVLDSLSKIADQLIVGGGIANTFIAAQGHDVGKSLYEADLVDEAKRLLTTCNIPVPSDVRVATEFSETAPATLKSVNDVKADEQILDIGDASAQELAEILKNAKTILWNGPVGVFEFPNFRKGTEIVANAIADSEAFSIAGGGDTLAAIDLFGIADKISYISTGGGAFLEFVEGKVLPAVAMLEERAKK.

Substrate-binding positions include 21–23 (DLN), Arg36, and 59–62 (HLGR). Residue Lys84 is modified to N6-acetyllysine. Substrate is bound by residues Arg113 and Arg146. Residues Lys197, Glu314, and 340–343 (GGDT) contribute to the ATP site.

Belongs to the phosphoglycerate kinase family. In terms of assembly, monomer.

It localises to the cytoplasm. It catalyses the reaction (2R)-3-phosphoglycerate + ATP = (2R)-3-phospho-glyceroyl phosphate + ADP. Its pathway is carbohydrate degradation; glycolysis; pyruvate from D-glyceraldehyde 3-phosphate: step 2/5. The polypeptide is Phosphoglycerate kinase (Escherichia coli O139:H28 (strain E24377A / ETEC)).